A 139-amino-acid polypeptide reads, in one-letter code: Large ribosomal subunit protein uL22 (139 aa).

The tract at residues 1-21 is disordered; the sequence is MTAPTPEFRNKKQRKQQVKLR.

Belongs to the universal ribosomal protein uL22 family. In terms of assembly, part of the 50S ribosomal subunit.

Its function is as follows. This protein binds specifically to 23S rRNA; its binding is stimulated by other ribosomal proteins, e.g. L4, L17, and L20. It is important during the early stages of 50S assembly. It makes multiple contacts with different domains of the 23S rRNA in the assembled 50S subunit and ribosome. Functionally, the globular domain of the protein is located near the polypeptide exit tunnel on the outside of the subunit, while an extended beta-hairpin is found that lines the wall of the exit tunnel in the center of the 70S ribosome. The protein is Large ribosomal subunit protein uL22 of Deinococcus deserti (strain DSM 17065 / CIP 109153 / LMG 22923 / VCD115).